The primary structure comprises 141 residues: MKENDVVLKSVTKIVVFILLTFGFYVFFAGHNNPGGGFIGGLIFSSAFILMFLAFDVNEVLKSLPIDFKKLMIIGSLISVATASVPMFFGKPFLYQTEANVTFPLLGHVHVTTVTLFELGILLTVVGVIVTVMLSISGGRS.

4 helical membrane-spanning segments follow: residues 10-30 (SVTK…FFAG), 35-55 (GGGF…FLAF), 70-90 (KLMI…MFFG), and 116-136 (LFEL…MLSI).

The protein belongs to the CPA3 antiporters (TC 2.A.63) subunit B family. May form a heterooligomeric complex that consists of seven subunits: mnhA2, mnhB2, mnhC2, mnhD2, mnhE2, mnhF2 and mnhG2.

It localises to the cell membrane. In Staphylococcus epidermidis (strain ATCC 35984 / DSM 28319 / BCRC 17069 / CCUG 31568 / BM 3577 / RP62A), this protein is Putative antiporter subunit mnhB2 (mnhB2).